The primary structure comprises 115 residues: Procyclic form-specific polypeptide (115 aa).

The signal sequence occupies residues 1 to 27; that stretch reads MAPRSLYLLAVLLFSANLFAGVGFAAA. The segment at 27-97 is disordered; it reads AAEGPEDKGL…PEPEPGAATL (71 aa). Over residues 31–52 the composition is skewed to basic and acidic residues; it reads PEDKGLTKGGKGKGEKGTKVGA. Asparagine 56 is a glycosylation site (N-linked (GlcNAc...) asparagine). 17 repeat units span residues 59 to 60, 61 to 62, 63 to 64, 65 to 66, 67 to 68, 69 to 70, 71 to 72, 73 to 74, 75 to 76, 77 to 78, 79 to 80, 81 to 82, 83 to 84, 85 to 86, 87 to 88, 89 to 90, and 91 to 92. A 17 X 2 AA tandem repeats of [DE]-P region spans residues 59-92; sequence DPDPEPEPEPEPEPEPEPEPEPEPEPEPEPEPEP. A compositionally biased stretch (acidic residues) spans 60–90; sequence PDPEPEPEPEPEPEPEPEPEPEPEPEPEPEP. Glycine 93 carries the GPI-anchor amidated glycine lipid modification. Residues 94–115 constitute a propeptide, removed in mature form; that stretch reads AATLKSVALPFAIAAAALVAAF.

It is found in the cell membrane. In terms of biological role, major surface antigen of procyclic forms. The sequence is that of Procyclic form-specific polypeptide (PROA) from Trypanosoma brucei brucei.